A 234-amino-acid polypeptide reads, in one-letter code: Ribosome-inactivating protein lychnin (234 aa).

An intrachain disulfide couples Cys-32 to Cys-115. The active site involves Glu-170.

Monomer.

It catalyses the reaction Endohydrolysis of the N-glycosidic bond at one specific adenosine on the 28S rRNA.. Its function is as follows. Ribosome-inactivating protein of type 1, inhibits protein synthesis in animal cells. Inhibits cell-free translation in rabbit reticulocyte lysate system with an IC(50) of 0.17 nM. This chain is Ribosome-inactivating protein lychnin, found in Silene chalcedonica (Maltese-cross).